The sequence spans 152 residues: Small ribosomal subunit protein uS13 (152 aa).

It belongs to the universal ribosomal protein uS13 family. In terms of assembly, component of the small ribosomal subunit.

It is found in the cytoplasm. Functionally, component of the small ribosomal subunit. The ribosome is a large ribonucleoprotein complex responsible for the synthesis of proteins in the cell. The sequence is that of Small ribosomal subunit protein uS13 (rps18) from Ictalurus punctatus (Channel catfish).